The sequence spans 224 residues: Endoplasmic reticulum vesicle protein 25 (224 aa).

The signal sequence occupies residues 1-25 (MIPPRSLGSTAALLLVLLFTTLASA). The Lumenal portion of the chain corresponds to 26–190 (IKFDLPSNAH…ADTNLSTNMR (165 aa)). Positions 38–131 (TKCIWNYALS…IPVVTIDLDV (94 aa)) constitute a GOLD domain. Residues 191–211 (VTNFAILTLIALIALGVWQVF) traverse the membrane as a helical segment. Residues 212-224 (HLRGFFKRKYLID) lie on the Cytoplasmic side of the membrane.

Belongs to the EMP24/GP25L family.

Its subcellular location is the endoplasmic reticulum membrane. The protein resides in the golgi apparatus membrane. Its function is as follows. Constituent of COPII-coated endoplasmic reticulum-derived transport vesicles. Required for efficient transport of a subset of secretory proteins to the Golgi. Facilitates retrograde transport from the Golgi to the endoplasmic reticulum. This chain is Endoplasmic reticulum vesicle protein 25 (ERV25), found in Mycosarcoma maydis (Corn smut fungus).